We begin with the raw amino-acid sequence, 438 residues long: Coenzyme A disulfide reductase (438 aa).

8–33 (GAVAGGATCASQIRRLDKESDIIIFE) contributes to the FAD binding site. Residues Thr-15, Gln-19, Arg-22, Ser-39, and Asn-42 each contribute to the substrate site. Cys-43 functions as the Nucleophile in the catalytic mechanism. Residue Cys-43 is the Redox-active of the active site. Lys-71 provides a ligand contact to substrate. Position 151-166 (151-166 (VLVVGAGYVSLEVLEN)) interacts with NADP(+). 267 to 277 (TNVPNIYAIGD) contributes to the FAD binding site. Position 299 (His-299) interacts with substrate. An FAD-binding site is contributed by Tyr-419. Lys-427 contacts substrate.

Belongs to the class-III pyridine nucleotide-disulfide oxidoreductase family. As to quaternary structure, homodimer. FAD is required as a cofactor.

It carries out the reaction NADP(+) + 2 CoA = CoA-disulfide + NADPH + H(+). In terms of biological role, catalyzes specifically the NADPH-dependent reduction of coenzyme A disulfide. In Staphylococcus aureus (strain MSSA476), this protein is Coenzyme A disulfide reductase.